The chain runs to 157 residues: Regulator of Ty1 transposition protein 102 (157 aa).

S77 is modified (phosphoserine). The segment at 95–157 is disordered; sequence SLMTSHTKGD…TKESKDVKMN (63 aa). The span at 96–116 shows a compositional bias: polar residues; it reads LMTSHTKGDTSKATGAPSANQ. S122 is modified (phosphoserine). Residues 147 to 157 are compositionally biased toward basic and acidic residues; that stretch reads NTKESKDVKMN.

As to quaternary structure, interacts with STH1 and SWI3. Component of the two forms of the RSC complex composed of at least either RSC1 or RSC2, and ARP7, ARP9, LDB7, NPL6, RSC3, RSC30, RSC4, RSC58, RSC6, RSC8, RSC9, SFH1, STH1, HTL1 and probably RTT102. The complexes interact with histone and histone variant components of centromeric chromatin. Probable additional component of the SWI/SNF global transcription activator complex. The 1.14 MDa SWI/SNF complex is composed of 11 different subunits: one copy each of SWI1, SNF2/SWI2, SNF5, SNF12/SWP73, ARP7/SWP61, ARP9/SWP59; two copies each of SWI3, SNF6, SNF11, SWP82; and three copies of TAF14/SWP29.

It is found in the nucleus. Functionally, probable component of the chromatin structure-remodeling complex (RSC) which is involved in transcription regulation and nucleosome positioning. RSC is responsible for the transfer of a histone octamer from a nucleosome core particle to naked DNA. The reaction requires ATP and involves an activated RSC-nucleosome intermediate. Remodeling reaction also involves DNA translocation, DNA twist and conformational change. As a reconfigurer of centromeric and flanking nucleosomes, RSC complex is required both for proper kinetochore function in chromosome segregation and, via a PKC1-dependent signaling pathway, for organization of the cellular cytoskeleton. Probable component of the SWI/SNF complex, an ATP-dependent chromatin-remodeling complex, is required for the positive and negative regulation of gene expression of a large number of genes. It changes chromatin structure by altering DNA-histone contacts within a nucleosome, leading eventually to a change in nucleosome position, thus facilitating or repressing binding of gene-specific transcription factors. The chain is Regulator of Ty1 transposition protein 102 (RTT102) from Saccharomyces cerevisiae (strain ATCC 204508 / S288c) (Baker's yeast).